The sequence spans 258 residues: Imidazole glycerol phosphate synthase subunit HisF (258 aa).

Active-site residues include aspartate 11 and aspartate 130.

This sequence belongs to the HisA/HisF family. Heterodimer of HisH and HisF.

It localises to the cytoplasm. It carries out the reaction 5-[(5-phospho-1-deoxy-D-ribulos-1-ylimino)methylamino]-1-(5-phospho-beta-D-ribosyl)imidazole-4-carboxamide + L-glutamine = D-erythro-1-(imidazol-4-yl)glycerol 3-phosphate + 5-amino-1-(5-phospho-beta-D-ribosyl)imidazole-4-carboxamide + L-glutamate + H(+). Its pathway is amino-acid biosynthesis; L-histidine biosynthesis; L-histidine from 5-phospho-alpha-D-ribose 1-diphosphate: step 5/9. Its function is as follows. IGPS catalyzes the conversion of PRFAR and glutamine to IGP, AICAR and glutamate. The HisF subunit catalyzes the cyclization activity that produces IGP and AICAR from PRFAR using the ammonia provided by the HisH subunit. The chain is Imidazole glycerol phosphate synthase subunit HisF from Rhodospirillum centenum (strain ATCC 51521 / SW).